The following is a 632-amino-acid chain: MTQQTMSFQAEVKQLLHLMIHSLYSNKEIFLRELVSNASDAADKLRFEALENNALYESDPNLRIRLSFDKAARTLTIDDNGIGMSRDEAIANLGTIARSGTKEFFSKLSGDQQKDAALIGQFGVGFYSGFIVADKITVETRRAGLPASEGVRWESAGEGDFSVDTIERAARGTTITLHLREGEDELLSSYRLKSIVQKYSDHVALPILMKKEEWDQEKGEMVEKDEDETVNQASALWTRAKSDVTEEQYKQFYQHVAHDHQDPLAWTHNRVEGRSEYTQLLFVPSHAPFDLWNRDYRGGLKLYVKRVFIMDDAEQLLPQYLRFIKGVVDSSDLPLNVSREILQESRDVKAIREGVTKRALSMLEELANAEDDAGKEKYKTFWSAFGQVLKEGVGEDHANRERVAKLLRFASTHGDTDAQDVALADYVARMKPEQTKIYYVTADTWQAAKNSPHLEVFRKKGVEVLLLTDRVDEWMLSFLHEFDGKPLASVARGDLDLGALNDDEKKAQEETGEAMKPVVDKMKETLGGKVKDVRVTFRLTDSPSCLVADDNDMSGYLQRMLKAAGQNAPSFQPILEINPEHPLVKALKADGADFGDWCHLLFDQALLAEGGALEDPASFVKRTNALLLSRAA.

Positions 1–339 are a; substrate-binding; sequence MTQQTMSFQA…SSDLPLNVSR (339 aa). The interval 340–559 is b; the sequence is EILQESRDVK…DNDMSGYLQR (220 aa). The tract at residues 560 to 632 is c; the sequence is MLKAAGQNAP…TNALLLSRAA (73 aa).

This sequence belongs to the heat shock protein 90 family. Homodimer.

The protein resides in the cytoplasm. Its function is as follows. Molecular chaperone. Has ATPase activity. The sequence is that of Chaperone protein HtpG from Burkholderia thailandensis (strain ATCC 700388 / DSM 13276 / CCUG 48851 / CIP 106301 / E264).